We begin with the raw amino-acid sequence, 838 residues long: Leucine--tRNA ligase (838 aa).

Positions proline 36–histidine 46 match the 'HIGH' region motif. Residues lysine 611 to serine 615 carry the 'KMSKS' region motif. Residue lysine 614 participates in ATP binding.

This sequence belongs to the class-I aminoacyl-tRNA synthetase family.

It localises to the cytoplasm. The catalysed reaction is tRNA(Leu) + L-leucine + ATP = L-leucyl-tRNA(Leu) + AMP + diphosphate. The chain is Leucine--tRNA ligase from Wolbachia sp. subsp. Drosophila simulans (strain wRi).